The chain runs to 781 residues: Mitochondrial inner membrane m-AAA protease component paraplegin (781 aa).

The N-terminal 43 residues, 1–43 (MAAALLLLRALRQSPEPGPWRLWAQLSGRSPGLFSGAGGRRPY), are a transit peptide targeting the mitochondrion. A propeptide spans 44–105 (VVRGTPIGLA…GSTLYFNTSG (62 aa)) (removed in mature form). Residues 105-134 (GLKQKNKDDDKPKGKAPEDDEEERRRKERE) form a disordered region. Over 106–144 (LKQKNKDDDKPKGKAPEDDEEERRRKEREDQMYRERLRT) the chain is Mitochondrial matrix. Positions 109-134 (KNKDDDKPKGKAPEDDEEERRRKERE) are enriched in basic and acidic residues. The chain crosses the membrane as a helical span at residues 145-165 (LFIIAIVMSLLNSLSTSGGSI). The Mitochondrial intermembrane portion of the chain corresponds to 166-248 (SWADFVNEML…DRIPVSYKRT (83 aa)). The helical transmembrane segment at 249-269 (GFFGNALYALGMTAVGLAILW) threads the bilayer. Residues 270 to 781 (YVFRLAGMTG…ASGEEEAPAP (512 aa)) are Mitochondrial matrix-facing. ATP contacts are provided by alanine 312, glycine 352, cysteine 353, glycine 354, lysine 355, threonine 356, and leucine 357. Position 505 is a 3'-nitrotyrosine (tyrosine 505). A Zn(2+)-binding site is contributed by histidine 574. The active site involves glutamate 575. Residues histidine 578 and aspartate 650 each coordinate Zn(2+). The tract at residues 701–781 (HEARLLVARA…ASGEEEAPAP (81 aa)) is interaction with PPIF.

This sequence in the N-terminal section; belongs to the AAA ATPase family. The protein in the C-terminal section; belongs to the peptidase M41 family. In terms of assembly, forms heterooligomers with AFG3L2; the m-AAA protease is composed of heterohexamers of AFG3L2 and SPG7. Component of the mitochondrial permeability transition pore complex (mPTPC), at least composed of SPG7, VDAC1 and PPIF. Interacts with MAIP1. It depends on Zn(2+) as a cofactor. In terms of processing, upon import into the mitochondrion, the N-terminal transit peptide is cleaved by the mitochondrial-processing peptidase (MPP) to generate an intermediate form which undergoes a second proteolytic cleavage mediated by proteases AFG3L2 removing an additional N-terminal fragment to generate the proteolytically active mature form.

It localises to the mitochondrion inner membrane. It carries out the reaction ATP + H2O = ADP + phosphate + H(+). Catalytic component of the m-AAA protease, a protease that plays a key role in proteostasis of inner mitochondrial membrane proteins, and which is essential for axonal and neuron development. SPG7 possesses both ATPase and protease activities: the ATPase activity is required to unfold substrates, threading them into the internal proteolytic cavity for hydrolysis into small peptide fragments. The m-AAA protease exerts a dual role in the mitochondrial inner membrane: it mediates the processing of specific regulatory proteins and ensures protein quality control by degrading misfolded polypeptides. Mediates protein maturation of the mitochondrial ribosomal subunit MRPL32/bL32m by catalyzing the cleavage of the presequence of MRPL32/bL32m prior to assembly into the mitochondrial ribosome. Acts as a regulator of calcium in neurons by mediating degradation of SMDT1/EMRE before its assembly with the uniporter complex, limiting the availability of SMDT1/EMRE for MCU assembly and promoting efficient assembly of gatekeeper subunits with MCU. Also regulates mitochondrial calcium by catalyzing degradation of MCU. Plays a role in the formation and regulation of the mitochondrial permeability transition pore (mPTP) and its proteolytic activity is dispensable for this function. The polypeptide is Mitochondrial inner membrane m-AAA protease component paraplegin (Spg7) (Rattus norvegicus (Rat)).